The following is a 487-amino-acid chain: GTPase Der (487 aa).

EngA-type G domains are found at residues 3 to 167 (LTLA…DEME) and 203 to 378 (LQVA…EVWN). Residues 9–16 (GRPNVGKS), 56–60 (DTAGL), and 119–122 (NKAE) each bind GTP. The span at 167-190 (EQQAEEQAPETDVDLDPEDEDGEE) shows a compositional bias: acidic residues. A disordered region spans residues 167-191 (EQQAEEQAPETDVDLDPEDEDGEEV). GTP contacts are provided by residues 209–216 (GRPNAGKS), 256–260 (DTAGM), and 321–324 (NKWD). Residues 379–465 (RRIPTAALNR…RLTLRGQGDK (87 aa)) enclose the KH-like domain. Residues 458–487 (TLRGQGDKNPYKGRRKKNAGALAKHLKSRG) form a disordered region. Residues 468–487 (YKGRRKKNAGALAKHLKSRG) show a composition bias toward basic residues.

Belongs to the TRAFAC class TrmE-Era-EngA-EngB-Septin-like GTPase superfamily. EngA (Der) GTPase family. In terms of assembly, associates with the 50S ribosomal subunit.

In terms of biological role, GTPase that plays an essential role in the late steps of ribosome biogenesis. The polypeptide is GTPase Der (Ruegeria pomeroyi (strain ATCC 700808 / DSM 15171 / DSS-3) (Silicibacter pomeroyi)).